The primary structure comprises 452 residues: MVLNIKAPENIVLKPTITVFGVGGAGSNAVNNMIHANLQGANFVVANTDAQSLEHSLCINKIQLGVSTTRGLGAGASPEVGALAAQESENEIRSSLENSNMVFITAGMGGGTGTGSAPIIARIAKELGILTVGVVTKPFHFEGGHRMKTADKGLIELQQFVDTLIVIPNQNLFRIANEQTTFADAFKMADDVLHAGVRGVTDLMIMPGLINLDFADIKAVMSEMGKAMMGTGEDSGEDRAIKAAESAISNPLLDHSSMCGARGVLINITGGPDMTLFEVDNAANRIREEVDNIDANIIFGSTFNPELKGIIRVSVVATGIDADKVPKYKLAIDKNTNTLPEETYNESIIQHTQIETIPSFNSYSTENIEINESSIKQDYTGNEQELRLHVNAVNKPENNSQKSSFLGKIWESLRTSNNQTLERKNVIVNTVDQDNKESDIHDIPAFLRKKRD.

GTP is bound by residues 24 to 28, 111 to 113, Glu-142, Arg-146, and Asp-190; these read GAGSN and GTG.

This sequence belongs to the FtsZ family. In terms of assembly, homodimer. Polymerizes to form a dynamic ring structure in a strictly GTP-dependent manner. Interacts directly with several other division proteins.

The protein resides in the cytoplasm. Functionally, essential cell division protein that forms a contractile ring structure (Z ring) at the future cell division site. The regulation of the ring assembly controls the timing and the location of cell division. One of the functions of the FtsZ ring is to recruit other cell division proteins to the septum to produce a new cell wall between the dividing cells. Binds GTP and shows GTPase activity. In Rickettsia prowazekii (strain Madrid E), this protein is Cell division protein FtsZ.